We begin with the raw amino-acid sequence, 493 residues long: MHWADVIAADLLKRSNSHRIATGISPSGHIHLGNLREMVTADAIRRALLDAGGEAKIVYIADDFDPLRRRYPFLPEEYENYVGMPLCKIPDPEGCHDSYSEHFLQPFLESLEILGIPVEVRRAYQMYSEGLYENNTRIALKRRDEIARIIAEVTGRELEERWYPFMPLCENCGRINSTRVTSFDENWIYYECDCGHSGRVGYVGGGKLTWRVDWAARWQILSITCEPFGKDHAAAGGSYDTGVRIAREIFDYEPPYPVPYEWIHLKGKGAMKSSKGIVLPVREMVEVIPPEIVRYITIRVKPERHIEFDPGLGLLDLVEEFEEKFKEKDRSVELSLVGEVVYSDVPFRHLIVVGQIANWDLEKALEIIERTGYTVDDVTRRDVERRLKYARKWLEKYAPDNIKFEIPEKVTAEFSEEEKKFLRAYAERLRSDMKPEEIHTLVYDVSKEVGIKSSKAFQAIYKAILGKTYGPRVGYFIKSLGVEWVRERIKAAL.

The short motif at 26-34 (PSGHIHLGN) is the 'HIGH' region element. Positions 270 to 274 (AMKSS) match the 'KMSKS' region motif.

Belongs to the class-I aminoacyl-tRNA synthetase family.

It is found in the cytoplasm. The catalysed reaction is tRNA(Lys) + L-lysine + ATP = L-lysyl-tRNA(Lys) + AMP + diphosphate. The protein is Lysine--tRNA ligase (lysS) of Archaeoglobus fulgidus (strain ATCC 49558 / DSM 4304 / JCM 9628 / NBRC 100126 / VC-16).